We begin with the raw amino-acid sequence, 419 residues long: Histidine--tRNA ligase (419 aa).

This sequence belongs to the class-II aminoacyl-tRNA synthetase family. As to quaternary structure, homodimer.

The protein localises to the cytoplasm. It carries out the reaction tRNA(His) + L-histidine + ATP = L-histidyl-tRNA(His) + AMP + diphosphate + H(+). In Thiobacillus denitrificans (strain ATCC 25259 / T1), this protein is Histidine--tRNA ligase.